A 108-amino-acid chain; its full sequence is Urease subunit beta (108 aa).

This sequence belongs to the urease beta subunit family. Heterotrimer of UreA (gamma), UreB (beta) and UreC (alpha) subunits. Three heterotrimers associate to form the active enzyme.

It localises to the cytoplasm. It carries out the reaction urea + 2 H2O + H(+) = hydrogencarbonate + 2 NH4(+). The protein operates within nitrogen metabolism; urea degradation; CO(2) and NH(3) from urea (urease route): step 1/1. The chain is Urease subunit beta from Microcystis aeruginosa (strain NIES-843 / IAM M-2473).